A 244-amino-acid chain; its full sequence is MNIDLNADLGEGCASDAALLQLVSSANIACGFHAGDAQTMLASVREALKNGVAIGAHPSFPDRENFGRTAMTLLPETVYAQTLYQIGALAAIARAEGGVMRHVKPHGMLYNQAAKDPQLADAIARAVHACDPSLILVGLAGSELIRAGEHYGLTTRQEVFADRGYQADGSLVPRTQPGALVEDEEHALAQTLGMVESGRVKSITGEWANVVAQTVCIHGDGEHALAFARRLRAAFEERSIRIMA.

It belongs to the LamB/PxpA family. Forms a complex composed of PxpA, PxpB and PxpC.

The catalysed reaction is 5-oxo-L-proline + ATP + 2 H2O = L-glutamate + ADP + phosphate + H(+). Its function is as follows. Catalyzes the cleavage of 5-oxoproline to form L-glutamate coupled to the hydrolysis of ATP to ADP and inorganic phosphate. The chain is 5-oxoprolinase subunit A from Citrobacter koseri (strain ATCC BAA-895 / CDC 4225-83 / SGSC4696).